Here is a 451-residue protein sequence, read N- to C-terminus: Chromosomal replication initiator protein DnaA (451 aa).

Residues Met-1 to Arg-72 form a domain I, interacts with DnaA modulators region. Positions Arg-72–His-108 are domain II. The domain III, AAA+ region stretch occupies residues Met-109–Ser-325. Gly-153, Gly-155, Lys-156, and Thr-157 together coordinate ATP. The segment at Ser-326 to Phe-451 is domain IV, binds dsDNA.

This sequence belongs to the DnaA family. In terms of assembly, oligomerizes as a right-handed, spiral filament on DNA at oriC.

The protein localises to the cytoplasm. Its function is as follows. Plays an essential role in the initiation and regulation of chromosomal replication. ATP-DnaA binds to the origin of replication (oriC) to initiate formation of the DNA replication initiation complex once per cell cycle. Binds the DnaA box (a 9 base pair repeat at the origin) and separates the double-stranded (ds)DNA. Forms a right-handed helical filament on oriC DNA; dsDNA binds to the exterior of the filament while single-stranded (ss)DNA is stabiized in the filament's interior. The ATP-DnaA-oriC complex binds and stabilizes one strand of the AT-rich DNA unwinding element (DUE), permitting loading of DNA polymerase. After initiation quickly degrades to an ADP-DnaA complex that is not apt for DNA replication. Binds acidic phospholipids. This is Chromosomal replication initiator protein DnaA from Listeria monocytogenes serotype 4b (strain F2365).